We begin with the raw amino-acid sequence, 362 residues long: Dihydroorotate dehydrogenase (quinone) (362 aa).

FMN is bound by residues Ala62–Lys66 and Thr86. Position 66 (Lys66) interacts with substrate. Asn111–Phe115 provides a ligand contact to substrate. Residues Asn139 and Asn170 each coordinate FMN. Residue Asn170 coordinates substrate. Residue Ser173 is the Nucleophile of the active site. Residue Asn175 coordinates substrate. FMN contacts are provided by Lys215 and Ser243. A substrate-binding site is contributed by Asn244–Thr245. Residues Gly266, Gly295, and Tyr316–Ser317 contribute to the FMN site.

This sequence belongs to the dihydroorotate dehydrogenase family. Type 2 subfamily. In terms of assembly, monomer. FMN serves as cofactor.

The protein resides in the cell membrane. The enzyme catalyses (S)-dihydroorotate + a quinone = orotate + a quinol. It functions in the pathway pyrimidine metabolism; UMP biosynthesis via de novo pathway; orotate from (S)-dihydroorotate (quinone route): step 1/1. In terms of biological role, catalyzes the conversion of dihydroorotate to orotate with quinone as electron acceptor. This is Dihydroorotate dehydrogenase (quinone) from Sinorhizobium fredii (strain NBRC 101917 / NGR234).